Reading from the N-terminus, the 479-residue chain is RAC-gamma serine/threonine-protein kinase (479 aa).

S2 bears the N-acetylserine mark. Residues 5–107 (TIVKEGWVQK…WTEAIQAVAD (103 aa)) enclose the PH domain. Cysteines 59 and 76 form a disulfide. The 258-residue stretch at 148 to 405 (FDYLKLLGKG…AKEIMRHSFF (258 aa)) folds into the Protein kinase domain. Residues 154-162 (LGKGTFGKV) and K177 each bind ATP. Residue D271 is the Proton acceptor of the active site. C293 and C307 are joined by a disulfide. A glycan (O-linked (GlcNAc) threonine) is linked at T302. T305 is modified (phosphothreonine; by PDPK1). The O-linked (GlcNAc) threonine glycan is linked to T309. The region spanning 406 to 479 (SGVNWQDVYD…QFSYSASGRE (74 aa)) is the AGC-kinase C-terminal domain. The tract at residues 445–479 (TITPPEKYDDDGMDGMDNERRPHFPQFSYSASGRE) is disordered. Residue T447 is modified to Phosphothreonine. Position 472 is a phosphoserine; by PKC/PRKCZ (S472). Residue S472 is glycosylated (O-linked (GlcNAc) serine; alternate).

This sequence belongs to the protein kinase superfamily. AGC Ser/Thr protein kinase family. RAC subfamily. In terms of assembly, interacts (via PH domain) with TCL1A; this enhances AKT3 phosphorylation and activation. Interacts with TRAF6. Interacts with KCTD20. Interacts with BTBD10. In terms of processing, phosphorylation on Thr-305 and Ser-472 is required for full activity. Phosphorylation of the activation loop at Thr-305 by PDPK1/PDK1 is a prerequisite for full activation. Phosphorylation at Ser-472 by mTORC2 in response to growth factors plays a key role in AKT1 activation by facilitating subsequent phosphorylation of the activation loop by PDPK1/PDK1. Post-translationally, ubiquitinated. When fully phosphorylated and translocated into the nucleus, undergoes 'Lys-48'-polyubiquitination catalyzed by TTC3, leading to its degradation by the proteasome. O-GlcNAcylation at Thr-302 and Thr-309 inhibits activating phosphorylation at Thr-305 via disrupting the interaction between AKT and PDPK1/PDK1. In terms of tissue distribution, isoform 1 is expressed in prostate, testis, uterus and mammary gland and isoform 2 is expressed in prostate, testis and mammary gland.

It is found in the nucleus. The protein resides in the cytoplasm. The protein localises to the membrane. It catalyses the reaction L-seryl-[protein] + ATP = O-phospho-L-seryl-[protein] + ADP + H(+). It carries out the reaction L-threonyl-[protein] + ATP = O-phospho-L-threonyl-[protein] + ADP + H(+). Its activity is regulated as follows. Two specific sites, one in the kinase domain (Thr-305) and the other in the C-terminal regulatory region (Ser-472), need to be phosphorylated for its full activation. IGF-1 leads to the activation of AKT3, which may play a role in regulating cell survival. AKT3 is one of 3 closely related serine/threonine-protein kinases (AKT1, AKT2 and AKT3) called the AKT kinase, and which regulate many processes including metabolism, proliferation, cell survival, growth and angiogenesis. This is mediated through serine and/or threonine phosphorylation of a range of downstream substrates. Over 100 substrate candidates have been reported so far, but for most of them, no isoform specificity has been reported. AKT3 is the least studied AKT isoform. It plays an important role in brain development and is crucial for the viability of malignant glioma cells. AKT3 isoform may also be the key molecule in up-regulation and down-regulation of MMP13 via IL13. Required for the coordination of mitochondrial biogenesis with growth factor-induced increases in cellular energy demands. Down-regulation by RNA interference reduces the expression of the phosphorylated form of BAD, resulting in the induction of caspase-dependent apoptosis. The chain is RAC-gamma serine/threonine-protein kinase (Akt3) from Mus musculus (Mouse).